A 215-amino-acid chain; its full sequence is Phosphatidylserine decarboxylase proenzyme (215 aa).

Ser185 (schiff-base intermediate with substrate; via pyruvic acid) is an active-site residue. Position 185 is a pyruvic acid (Ser); by autocatalysis (Ser185).

It belongs to the phosphatidylserine decarboxylase family. PSD-A subfamily. Heterodimer of a large membrane-associated beta subunit and a small pyruvoyl-containing alpha subunit. Pyruvate serves as cofactor. In terms of processing, is synthesized initially as an inactive proenzyme. Formation of the active enzyme involves a self-maturation process in which the active site pyruvoyl group is generated from an internal serine residue via an autocatalytic post-translational modification. Two non-identical subunits are generated from the proenzyme in this reaction, and the pyruvate is formed at the N-terminus of the alpha chain, which is derived from the carboxyl end of the proenzyme. The post-translation cleavage follows an unusual pathway, termed non-hydrolytic serinolysis, in which the side chain hydroxyl group of the serine supplies its oxygen atom to form the C-terminus of the beta chain, while the remainder of the serine residue undergoes an oxidative deamination to produce ammonia and the pyruvoyl prosthetic group on the alpha chain.

The protein resides in the cell membrane. It catalyses the reaction a 1,2-diacyl-sn-glycero-3-phospho-L-serine + H(+) = a 1,2-diacyl-sn-glycero-3-phosphoethanolamine + CO2. It functions in the pathway phospholipid metabolism; phosphatidylethanolamine biosynthesis; phosphatidylethanolamine from CDP-diacylglycerol: step 2/2. Its function is as follows. Catalyzes the formation of phosphatidylethanolamine (PtdEtn) from phosphatidylserine (PtdSer). The polypeptide is Phosphatidylserine decarboxylase proenzyme (Streptomyces avermitilis (strain ATCC 31267 / DSM 46492 / JCM 5070 / NBRC 14893 / NCIMB 12804 / NRRL 8165 / MA-4680)).